The sequence spans 555 residues: Hydroxylamine reductase (555 aa).

[4Fe-4S] cluster-binding residues include cysteine 3, cysteine 6, cysteine 18, and cysteine 25. 8 residues coordinate hybrid [4Fe-2O-2S] cluster: histidine 252, glutamate 276, cysteine 320, cysteine 407, cysteine 435, cysteine 460, glutamate 494, and lysine 496. A Cysteine persulfide modification is found at cysteine 407.

It belongs to the HCP family. [4Fe-4S] cluster is required as a cofactor. The cofactor is hybrid [4Fe-2O-2S] cluster.

The protein resides in the cytoplasm. It carries out the reaction A + NH4(+) + H2O = hydroxylamine + AH2 + H(+). Functionally, catalyzes the reduction of hydroxylamine to form NH(3) and H(2)O. The polypeptide is Hydroxylamine reductase (Burkholderia ambifaria (strain MC40-6)).